Reading from the N-terminus, the 339-residue chain is Ketol-acid reductoisomerase (NADP(+)) (339 aa).

One can recognise a KARI N-terminal Rossmann domain in the interval 1-182 (MRVYYDRDAD…GGGRSGIIET (182 aa)). NADP(+)-binding positions include 24 to 27 (YGSQ), Arg-48, Ser-51, Thr-53, and 83 to 86 (DEHQ). The active site involves His-108. Residue Gly-134 participates in NADP(+) binding. The region spanning 183 to 328 (NFREECETDL…ARLRGMMPWI (146 aa)) is the KARI C-terminal knotted domain. Mg(2+) contacts are provided by Asp-191, Glu-195, Glu-227, and Glu-231. Ser-252 lines the substrate pocket.

The protein belongs to the ketol-acid reductoisomerase family. Mg(2+) serves as cofactor.

The catalysed reaction is (2R)-2,3-dihydroxy-3-methylbutanoate + NADP(+) = (2S)-2-acetolactate + NADPH + H(+). It carries out the reaction (2R,3R)-2,3-dihydroxy-3-methylpentanoate + NADP(+) = (S)-2-ethyl-2-hydroxy-3-oxobutanoate + NADPH + H(+). Its pathway is amino-acid biosynthesis; L-isoleucine biosynthesis; L-isoleucine from 2-oxobutanoate: step 2/4. It participates in amino-acid biosynthesis; L-valine biosynthesis; L-valine from pyruvate: step 2/4. Functionally, involved in the biosynthesis of branched-chain amino acids (BCAA). Catalyzes an alkyl-migration followed by a ketol-acid reduction of (S)-2-acetolactate (S2AL) to yield (R)-2,3-dihydroxy-isovalerate. In the isomerase reaction, S2AL is rearranged via a Mg-dependent methyl migration to produce 3-hydroxy-3-methyl-2-ketobutyrate (HMKB). In the reductase reaction, this 2-ketoacid undergoes a metal-dependent reduction by NADPH to yield (R)-2,3-dihydroxy-isovalerate. This is Ketol-acid reductoisomerase (NADP(+)) from Caulobacter vibrioides (strain ATCC 19089 / CIP 103742 / CB 15) (Caulobacter crescentus).